Reading from the N-terminus, the 431-residue chain is 5-methylthioadenosine/S-adenosylhomocysteine deaminase (431 aa).

Zn(2+) is bound by residues His66 and His68. Substrate contacts are provided by Glu95, Arg147, and His185. His212 contributes to the Zn(2+) binding site. The substrate site is built by Glu215 and Asp300. Asp300 contacts Zn(2+).

It belongs to the metallo-dependent hydrolases superfamily. MTA/SAH deaminase family. Requires Zn(2+) as cofactor.

It carries out the reaction S-adenosyl-L-homocysteine + H2O + H(+) = S-inosyl-L-homocysteine + NH4(+). The enzyme catalyses S-methyl-5'-thioadenosine + H2O + H(+) = S-methyl-5'-thioinosine + NH4(+). Its function is as follows. Catalyzes the deamination of 5-methylthioadenosine and S-adenosyl-L-homocysteine into 5-methylthioinosine and S-inosyl-L-homocysteine, respectively. Is also able to deaminate adenosine. The chain is 5-methylthioadenosine/S-adenosylhomocysteine deaminase from Acetivibrio thermocellus (strain ATCC 27405 / DSM 1237 / JCM 9322 / NBRC 103400 / NCIMB 10682 / NRRL B-4536 / VPI 7372) (Clostridium thermocellum).